We begin with the raw amino-acid sequence, 389 residues long: Arrestin-C (389 aa).

The segment at A369–S389 is disordered.

The protein belongs to the arrestin family. In terms of assembly, homodimer; disulfide-linked in response to retinal illumination. Interacts with CXCR4; the interaction is dependent on the C-terminal phosphorylation of CXCR4 and modulates the calcium ion mobilization activity of CXCR4. Interacts with GPR84. As to expression, expressed in cone photoreceptors in the retina (at protein level).

The protein resides in the photoreceptor inner segment. The protein localises to the cell projection. It is found in the cilium. Its subcellular location is the photoreceptor outer segment. Functionally, may play a role in an as yet undefined retina-specific signal transduction. Could bind to photoactivated-phosphorylated red/green opsins. This is Arrestin-C (ARR3) from Bos taurus (Bovine).